The sequence spans 433 residues: Serine hydroxymethyltransferase (433 aa).

121–123 (AHV) provides a ligand contact to (6S)-5,6,7,8-tetrahydrofolate. N6-(pyridoxal phosphate)lysine is present on K227. Position 243 (E243) interacts with (6S)-5,6,7,8-tetrahydrofolate.

Belongs to the SHMT family. In terms of assembly, homodimer. Pyridoxal 5'-phosphate is required as a cofactor.

It localises to the cytoplasm. Its pathway is amino-acid biosynthesis; glycine biosynthesis; glycine from L-serine: step 1/1. Its function is as follows. Catalyzes the reversible interconversion of serine and glycine with a modified folate serving as the one-carbon carrier. Also exhibits a pteridine-independent aldolase activity toward beta-hydroxyamino acids, producing glycine and aldehydes, via a retro-aldol mechanism. The protein is Serine hydroxymethyltransferase of Saccharolobus islandicus (strain M.14.25 / Kamchatka #1) (Sulfolobus islandicus).